Consider the following 455-residue polypeptide: Argininosuccinate lyase (455 aa).

Belongs to the lyase 1 family. Argininosuccinate lyase subfamily.

The protein localises to the cytoplasm. It catalyses the reaction 2-(N(omega)-L-arginino)succinate = fumarate + L-arginine. The protein operates within amino-acid biosynthesis; L-arginine biosynthesis; L-arginine from L-ornithine and carbamoyl phosphate: step 3/3. The polypeptide is Argininosuccinate lyase (Roseiflexus castenholzii (strain DSM 13941 / HLO8)).